Reading from the N-terminus, the 872-residue chain is Alanine--tRNA ligase (872 aa).

The Zn(2+) site is built by His567, His571, Cys669, and His673.

It belongs to the class-II aminoacyl-tRNA synthetase family. Zn(2+) serves as cofactor.

It is found in the cytoplasm. The enzyme catalyses tRNA(Ala) + L-alanine + ATP = L-alanyl-tRNA(Ala) + AMP + diphosphate. In terms of biological role, catalyzes the attachment of alanine to tRNA(Ala) in a two-step reaction: alanine is first activated by ATP to form Ala-AMP and then transferred to the acceptor end of tRNA(Ala). Also edits incorrectly charged Ser-tRNA(Ala) and Gly-tRNA(Ala) via its editing domain. The protein is Alanine--tRNA ligase of Streptococcus pyogenes serotype M1.